We begin with the raw amino-acid sequence, 386 residues long: NifS-like protein (386 aa).

Pyridoxal 5'-phosphate is bound by residues 58-59 (SE) and 184-186 (SIN).

It belongs to the class-V pyridoxal-phosphate-dependent aminotransferase family. NifS/IscS subfamily. It depends on pyridoxal 5'-phosphate as a cofactor.

It localises to the virion. The protein is NifS-like protein of Ornithodoros (relapsing fever ticks).